A 321-amino-acid chain; its full sequence is Olfactory receptor 5K3 (321 aa).

The Extracellular segment spans residues 1–25 (MNKENHSLIAEFILTGFTYHPKLKT). An N-linked (GlcNAc...) asparagine glycan is attached at Asn-5. The helical transmembrane segment at 26–46 (VLFVVFFAIYLITMVGNIGLV) threads the bilayer. Topologically, residues 47–56 (ALIYIEQRLH) are cytoplasmic. A helical membrane pass occupies residues 57–77 (TPMYIFLGNLVLMDSCCSSAI). Over 78–97 (TPKMLENFFSEDKRITLYEC) the chain is Extracellular. Cys-97 and Cys-179 are oxidised to a cystine. Residues 98 to 118 (MAQFYFLCLAETTDCFLLAAM) form a helical membrane-spanning segment. Residues 119-143 (AYDCYVAICNPLQYHTMMSKTLCIQ) lie on the Cytoplasmic side of the membrane. The chain crosses the membrane as a helical span at residues 144-164 (MTAGAYLAGNLHPMIEVEFLL). Topologically, residues 165 to 196 (RLTFCGSHQINHFFCDVLPLYRLSCINPYINE) are extracellular. Residues 197–217 (LVLFILAGSIQIFTIVLVSYF) traverse the membrane as a helical segment. Residues 218–235 (YILFTIFTMKSKEGRGKA) are Cytoplasmic-facing. Residues 236 to 256 (LSTCASHFLSVSIFCDSLLFM) traverse the membrane as a helical segment. At 257–269 (YARPGAVNEGDKD) the chain is on the extracellular side. The chain crosses the membrane as a helical span at residues 270 to 290 (IPVAIFYTLVIPLLNPFIYSL). Residues 291-321 (RNKEVINIMKKIMKKRKFCHILKQMSSPLAT) lie on the Cytoplasmic side of the membrane.

Belongs to the G-protein coupled receptor 1 family.

The protein localises to the cell membrane. Odorant receptor. The protein is Olfactory receptor 5K3 (OR5K3) of Homo sapiens (Human).